The chain runs to 161 residues: Lipoprotein LpqH (161 aa).

Residues 1 to 21 (MNRQLRFAVAGPEILAAVVSG) form the signal peptide. Residues 21–46 (GCSSGNKSAPSSSASSSSTSPSASSG) show a composition bias toward low complexity. Residues 21 to 49 (GCSSGNKSAPSSSASSSSTSPSASSGGAA) are disordered. C22 is lipidated: N-palmitoyl cysteine. C22 is lipidated: S-diacylglycerol cysteine.

Belongs to the mycobacterial 19 kDa antigen family. Post-translationally, modified by Lgt on Cys-22 with an S-linked diacylglycerol with a mixture of C16, C18 and C19 fatty acids, signal peptide is removed by LspA, modifed by Lnt with an amide-linked mixture of C16 and C19 fatty acids.

Its subcellular location is the cell membrane. In terms of biological role, might be involved in ligand transport. A host TLR2 agonist, modifies host gene expression in response to pathogen. This chain is Lipoprotein LpqH (lpqH), found in Mycobacterium avium.